Consider the following 165-residue polypeptide: Protein SprT (165 aa).

The region spanning 20 to 163 is the SprT-like domain; it reads EKLAQANLKL…RCVHCGEQLV (144 aa). His78 lines the Zn(2+) pocket. Residue Glu79 is part of the active site. His82 is a binding site for Zn(2+).

The protein belongs to the SprT family. It depends on Zn(2+) as a cofactor.

It localises to the cytoplasm. The polypeptide is Protein SprT (Escherichia coli O127:H6 (strain E2348/69 / EPEC)).